The primary structure comprises 322 residues: Ribosomal RNA small subunit methyltransferase H (322 aa).

S-adenosyl-L-methionine contacts are provided by residues 47 to 49 (GGH), Asp67, Phe93, Asp112, and Gln119.

It belongs to the methyltransferase superfamily. RsmH family.

It localises to the cytoplasm. It catalyses the reaction cytidine(1402) in 16S rRNA + S-adenosyl-L-methionine = N(4)-methylcytidine(1402) in 16S rRNA + S-adenosyl-L-homocysteine + H(+). In terms of biological role, specifically methylates the N4 position of cytidine in position 1402 (C1402) of 16S rRNA. The sequence is that of Ribosomal RNA small subunit methyltransferase H from Stenotrophomonas maltophilia (strain R551-3).